The following is a 207-amino-acid chain: Large ribosomal subunit protein uL4 (207 aa).

The segment at 49–73 is disordered; that stretch reads AKKRGEVSGGGKKPWKQKGGGRARA.

The protein belongs to the universal ribosomal protein uL4 family. In terms of assembly, part of the 50S ribosomal subunit.

Its function is as follows. One of the primary rRNA binding proteins, this protein initially binds near the 5'-end of the 23S rRNA. It is important during the early stages of 50S assembly. It makes multiple contacts with different domains of the 23S rRNA in the assembled 50S subunit and ribosome. Functionally, forms part of the polypeptide exit tunnel. The polypeptide is Large ribosomal subunit protein uL4 (Helicobacter hepaticus (strain ATCC 51449 / 3B1)).